The following is an 866-amino-acid chain: Probable beta-glucosidase F (866 aa).

The first 20 residues, 1–20 (MAAFPAYLALLSYLVPGALS), serve as a signal peptide directing secretion. N65, N73, and N257 each carry an N-linked (GlcNAc...) asparagine glycan. D285 is an active-site residue. N-linked (GlcNAc...) asparagine glycans are attached at residues N328, N360, N395, N421, N474, N659, N664, and N724. The tract at residues 725–748 (SSKTYPYPDGYTTEPKPAPRAGGA) is disordered.

It belongs to the glycosyl hydrolase 3 family.

It localises to the secreted. The enzyme catalyses Hydrolysis of terminal, non-reducing beta-D-glucosyl residues with release of beta-D-glucose.. It functions in the pathway glycan metabolism; cellulose degradation. In terms of biological role, beta-glucosidases are one of a number of cellulolytic enzymes involved in the degradation of cellulosic biomass. Catalyzes the last step releasing glucose from the inhibitory cellobiose. The polypeptide is Probable beta-glucosidase F (bglF) (Aspergillus oryzae (strain ATCC 42149 / RIB 40) (Yellow koji mold)).